We begin with the raw amino-acid sequence, 344 residues long: AA9 family lytic polysaccharide monooxygenase cel61A (344 aa).

The signal sequence occupies residues methionine 1–glycine 21. Cu(2+) is bound at residue histidine 22. Cystine bridges form between cysteine 77–cysteine 198 and cysteine 118–cysteine 122. An N-linked (GlcNAc...) asparagine glycan is attached at asparagine 80. Residue histidine 107 participates in Cu(2+) binding. Asparagine 158 is a glycosylation site (N-linked (GlcNAc...) asparagine). Positions 184 and 193 each coordinate O2. Residue tyrosine 195 participates in Cu(2+) binding. A disordered region spans residues alanine 262–threonine 310. Over residues proline 275–threonine 310 the composition is skewed to low complexity. Positions proline 307 to leucine 343 constitute a CBM1 domain.

The protein belongs to the polysaccharide monooxygenase AA9 family. Requires Cu(2+) as cofactor.

It localises to the secreted. It carries out the reaction [(1-&gt;4)-beta-D-glucosyl]n+m + reduced acceptor + O2 = 4-dehydro-beta-D-glucosyl-[(1-&gt;4)-beta-D-glucosyl]n-1 + [(1-&gt;4)-beta-D-glucosyl]m + acceptor + H2O.. Its function is as follows. Lytic polysaccharide monooxygenase (LPMO) that depolymerizes crystalline and amorphous polysaccharides via the oxidation of scissile alpha- or beta-(1-4)-glycosidic bonds, yielding C1 or C4 oxidation products. Catalysis by LPMOs requires the reduction of the active-site copper from Cu(II) to Cu(I) by a reducing agent and H(2)O(2) or O(2) as a cosubstrate. Shows activity on beta-glucan and amorphous cellulose. Does not show beta-1-3-glucanase, beta-1,6-glucanase, mannanase, xylanase, beta-1,3-galactosidase, amylase, pectinase, nor chitinase activities. In Hypocrea jecorina (Trichoderma reesei), this protein is AA9 family lytic polysaccharide monooxygenase cel61A.